Here is a 164-residue protein sequence, read N- to C-terminus: MSITFGELVGNFILVTGSVIVLLLLIKKFAWGAIESILQTRSQQISRDIDQAEQSRLSAQQLEAKSQANLDASRSQASKIISDAKEIGQLQGDKLVAEATDEAKRLKEKALTDIEQSKSDAISAVKTEMSDLTVLLAKKIMGANLDKTAQSQLIDSYLDDLGEA.

Residues Gly6–Ile26 form a helical membrane-spanning segment.

Belongs to the ATPase B chain family. In terms of assembly, F-type ATPases have 2 components, F(1) - the catalytic core - and F(0) - the membrane proton channel. F(1) has five subunits: alpha(3), beta(3), gamma(1), delta(1), epsilon(1). F(0) has three main subunits: a(1), b(2) and c(10-14). The alpha and beta chains form an alternating ring which encloses part of the gamma chain. F(1) is attached to F(0) by a central stalk formed by the gamma and epsilon chains, while a peripheral stalk is formed by the delta and b chains.

The protein resides in the cell membrane. F(1)F(0) ATP synthase produces ATP from ADP in the presence of a proton or sodium gradient. F-type ATPases consist of two structural domains, F(1) containing the extramembraneous catalytic core and F(0) containing the membrane proton channel, linked together by a central stalk and a peripheral stalk. During catalysis, ATP synthesis in the catalytic domain of F(1) is coupled via a rotary mechanism of the central stalk subunits to proton translocation. Its function is as follows. Component of the F(0) channel, it forms part of the peripheral stalk, linking F(1) to F(0). The protein is ATP synthase subunit b of Streptococcus pyogenes serotype M3 (strain ATCC BAA-595 / MGAS315).